Here is a 379-residue protein sequence, read N- to C-terminus: tRNA(Met) cytidine acetate ligase (379 aa).

ATP-binding positions include 7 to 20 (ITEY…HQYH), G100, N153, and R178.

The protein belongs to the TmcAL family.

The protein resides in the cytoplasm. It catalyses the reaction cytidine(34) in elongator tRNA(Met) + acetate + ATP = N(4)-acetylcytidine(34) in elongator tRNA(Met) + AMP + diphosphate. Its function is as follows. Catalyzes the formation of N(4)-acetylcytidine (ac(4)C) at the wobble position of elongator tRNA(Met), using acetate and ATP as substrates. First activates an acetate ion to form acetyladenylate (Ac-AMP) and then transfers the acetyl group to tRNA to form ac(4)C34. The protein is tRNA(Met) cytidine acetate ligase of Staphylococcus aureus (strain MRSA252).